We begin with the raw amino-acid sequence, 875 residues long: Protein translocase subunit SecA (875 aa).

ATP is bound by residues Gln-87, 105 to 109, and Asp-512; that span reads GEGKT. Zn(2+) contacts are provided by Cys-860, Cys-862, Cys-871, and His-872.

This sequence belongs to the SecA family. Monomer and homodimer. Part of the essential Sec protein translocation apparatus which comprises SecA, SecYEG and auxiliary proteins SecDF-YajC and YidC. It depends on Zn(2+) as a cofactor.

It localises to the cell inner membrane. The protein localises to the cytoplasm. The catalysed reaction is ATP + H2O + cellular proteinSide 1 = ADP + phosphate + cellular proteinSide 2.. In terms of biological role, part of the Sec protein translocase complex. Interacts with the SecYEG preprotein conducting channel. Has a central role in coupling the hydrolysis of ATP to the transfer of proteins into and across the cell membrane, serving both as a receptor for the preprotein-SecB complex and as an ATP-driven molecular motor driving the stepwise translocation of polypeptide chains across the membrane. The chain is Protein translocase subunit SecA from Buchnera aphidicola subsp. Acyrthosiphon pisum (strain 5A).